The sequence spans 265 residues: Translation initiation factor 2 subunit alpha (265 aa).

The S1 motif domain occupies Gly-12 to Lys-83.

It belongs to the eIF-2-alpha family. In terms of assembly, heterotrimer composed of an alpha, a beta and a gamma chain.

Functionally, eIF-2 functions in the early steps of protein synthesis by forming a ternary complex with GTP and initiator tRNA. This chain is Translation initiation factor 2 subunit alpha, found in Methanobrevibacter smithii (strain ATCC 35061 / DSM 861 / OCM 144 / PS).